A 286-amino-acid polypeptide reads, in one-letter code: 4-diphosphocytidyl-2-C-methyl-D-erythritol kinase (286 aa).

Residue lysine 13 is part of the active site. 99–109 (PMGGGLGGGSS) contributes to the ATP binding site. The active site involves aspartate 141.

It belongs to the GHMP kinase family. IspE subfamily.

It carries out the reaction 4-CDP-2-C-methyl-D-erythritol + ATP = 4-CDP-2-C-methyl-D-erythritol 2-phosphate + ADP + H(+). It participates in isoprenoid biosynthesis; isopentenyl diphosphate biosynthesis via DXP pathway; isopentenyl diphosphate from 1-deoxy-D-xylulose 5-phosphate: step 3/6. Its function is as follows. Catalyzes the phosphorylation of the position 2 hydroxy group of 4-diphosphocytidyl-2C-methyl-D-erythritol. This is 4-diphosphocytidyl-2-C-methyl-D-erythritol kinase from Herminiimonas arsenicoxydans.